We begin with the raw amino-acid sequence, 401 residues long: Subtilisin-like protease 7 (401 aa).

The N-terminal stretch at 1-20 (MGFITKAIPLALAAASVING) is a signal peptide. A propeptide spanning residues 21–119 (AEILETRAGV…IERDARVQIN (99 aa)) is cleaved from the precursor. Residues 36–118 (KYIVVMNDGM…YIERDARVQI (83 aa)) enclose the Inhibitor I9 domain. Residue N58 is glycosylated (N-linked (GlcNAc...) asparagine). The region spanning 129–401 (SWGLARVGSR…SKLINNGSGM (273 aa)) is the Peptidase S8 domain. Catalysis depends on charge relay system residues D161 and H193. N-linked (GlcNAc...) asparagine glycans are attached at residues N223 and N253. S347 serves as the catalytic Charge relay system. N397 is a glycosylation site (N-linked (GlcNAc...) asparagine).

It belongs to the peptidase S8 family.

It is found in the secreted. In terms of biological role, secreted subtilisin-like serine protease with keratinolytic activity that contributes to pathogenicity. This chain is Subtilisin-like protease 7 (SUB7), found in Trichophyton tonsurans (Scalp ringworm fungus).